A 125-amino-acid polypeptide reads, in one-letter code: Large ribosomal subunit protein bL20 (125 aa).

It belongs to the bacterial ribosomal protein bL20 family.

In terms of biological role, binds directly to 23S ribosomal RNA and is necessary for the in vitro assembly process of the 50S ribosomal subunit. It is not involved in the protein synthesizing functions of that subunit. This Thermobifida fusca (strain YX) protein is Large ribosomal subunit protein bL20.